The chain runs to 155 residues: SsrA-binding protein (155 aa).

The protein belongs to the SmpB family.

Its subcellular location is the cytoplasm. Its function is as follows. Required for rescue of stalled ribosomes mediated by trans-translation. Binds to transfer-messenger RNA (tmRNA), required for stable association of tmRNA with ribosomes. tmRNA and SmpB together mimic tRNA shape, replacing the anticodon stem-loop with SmpB. tmRNA is encoded by the ssrA gene; the 2 termini fold to resemble tRNA(Ala) and it encodes a 'tag peptide', a short internal open reading frame. During trans-translation Ala-aminoacylated tmRNA acts like a tRNA, entering the A-site of stalled ribosomes, displacing the stalled mRNA. The ribosome then switches to translate the ORF on the tmRNA; the nascent peptide is terminated with the 'tag peptide' encoded by the tmRNA and targeted for degradation. The ribosome is freed to recommence translation, which seems to be the essential function of trans-translation. This chain is SsrA-binding protein, found in Bacillus mycoides (strain KBAB4) (Bacillus weihenstephanensis).